The sequence spans 343 residues: Tryptophan--tRNA ligase (343 aa).

Residues 15–17 (QPT) and 24–25 (GN) each bind ATP. Residues 16 to 25 (PTSDSLHLGN) carry the 'HIGH' region motif. Asp-145 is a binding site for L-tryptophan. Residues 157-159 (GED), Ile-196, and 205-209 (KMSKS) contribute to the ATP site. The 'KMSKS' region motif lies at 205-209 (KMSKS).

The protein belongs to the class-I aminoacyl-tRNA synthetase family. In terms of assembly, homodimer.

The protein localises to the cytoplasm. The catalysed reaction is tRNA(Trp) + L-tryptophan + ATP = L-tryptophyl-tRNA(Trp) + AMP + diphosphate + H(+). Catalyzes the attachment of tryptophan to tRNA(Trp). The protein is Tryptophan--tRNA ligase of Mycobacterium leprae (strain TN).